A 74-amino-acid chain; its full sequence is Protein SlyX homolog (74 aa).

The protein belongs to the SlyX family.

The protein is Protein SlyX homolog of Neisseria meningitidis serogroup C / serotype 2a (strain ATCC 700532 / DSM 15464 / FAM18).